The chain runs to 707 residues: Keratin, type II cytoskeletal 2 epidermal (707 aa).

The tract at residues 1 to 20 (MSCQISCRSRRGGGGGGGGG) is disordered. The head stretch occupies residues 1 to 198 (MSCQISCRSR…DPEIQNVKSQ (198 aa)). Asymmetric dimethylarginine is present on Arg22. Ser25 and Ser28 each carry phosphoserine. Low complexity predominate over residues 29–38 (AVVSGGSRRS). The segment at 29–59 (AVVSGGSRRSNTSFSCISRHGGGRGGSGGGG) is disordered. Arg52 carries the post-translational modification Omega-N-methylarginine. Ser64 is modified (phosphoserine). The segment at 199-234 (EREQIKTLNNKFASFIDKVRFLEQQNQVLRTKWELL) is coil 1A. The 314-residue stretch at 199-512 (EREQIKTLNN…KLLEGEECRM (314 aa)) folds into the IF rod domain. Positions 235-253 (QQLDVGSRTTNLDPIFQAY) are linker 1. The coil 1B stretch occupies residues 254-345 (IGMLKKQVDR…TLYDAELSQL (92 aa)). Residues 346 to 369 (QQDVTDTNVILSMDNNRNLDLDSI) form a linker 12 region. The interval 370–508 (IAEVQNQYEM…ATYRKLLEGE (139 aa)) is coil 2. Residues 509-707 (ECRMSGDFSD…CGSGVTFSFR (199 aa)) form a tail region. Positions 531-707 (SSVASKTGFG…CGSGVTFSFR (177 aa)) are disordered. Residues 539–700 (FGSGGQSSGG…GSGSGEGCGS (162 aa)) show a composition bias toward gly residues. Omega-N-methylarginine occurs at positions 555, 593, 607, and 675.

Belongs to the intermediate filament family. Heterotetramer of two type I and two type II keratins. Associates with KRT10. In terms of tissue distribution, expressed predominantly in the suprabasal layers of the plantar epidermis outside of the footpads (at protein level). Expressed in the suprabasal layers of the interfollicular epidermis of the ear, in the interscale regions distant from the hair follicles in the tail, and in the soles of the footpads (at protein level). Expressed mainly in the middle spinous and granular cells of the epidermis of adult tail, nipple and footsole skin. Also found in ear.

Its subcellular location is the cytoplasm. Its function is as follows. Probably contributes to terminal cornification. Associated with keratinocyte activation, proliferation and keratinization. Required for maintenance of corneocytes and keratin filaments in suprabasal keratinocytes in the epidermis of the ear, potentially via moderation of expression and localization of keratins and their partner proteins. Plays a role in the establishment of the epidermal barrier on plantar skin. This chain is Keratin, type II cytoskeletal 2 epidermal, found in Mus musculus (Mouse).